Consider the following 231-residue polypeptide: Isoprenyl transferase (231 aa).

Residue D14 is part of the active site. D14 is a Mg(2+) binding site. Substrate contacts are provided by residues 15–18 (GNGR), W19, R27, H31, and 59–61 (STE). The active-site Proton acceptor is the N62. Substrate-binding positions include W63, R65, R176, and 182-184 (RIS). E195 is a binding site for Mg(2+).

The protein belongs to the UPP synthase family. As to quaternary structure, homodimer. Requires Mg(2+) as cofactor.

Its function is as follows. Catalyzes the condensation of isopentenyl diphosphate (IPP) with allylic pyrophosphates generating different type of terpenoids. This is Isoprenyl transferase from Aquifex pyrophilus.